We begin with the raw amino-acid sequence, 118 residues long: Small ribosomal subunit protein uS13 (118 aa).

The segment at 94-118 (GLPVRGQRTKTNARTRKGPRKPIKK) is disordered.

The protein belongs to the universal ribosomal protein uS13 family. As to quaternary structure, part of the 30S ribosomal subunit. Forms a loose heterodimer with protein S19. Forms two bridges to the 50S subunit in the 70S ribosome.

Its function is as follows. Located at the top of the head of the 30S subunit, it contacts several helices of the 16S rRNA. In the 70S ribosome it contacts the 23S rRNA (bridge B1a) and protein L5 of the 50S subunit (bridge B1b), connecting the 2 subunits; these bridges are implicated in subunit movement. Contacts the tRNAs in the A and P-sites. The sequence is that of Small ribosomal subunit protein uS13 from Edwardsiella ictaluri (strain 93-146).